The following is a 306-amino-acid chain: D-alanine--D-alanine ligase B (306 aa).

Residues Glu15 and Ser150 contribute to the active site. The region spanning 101–303 (KLLWQGAGLP…FSQLVVRILE (203 aa)) is the ATP-grasp domain. 134-189 (ISSLGLPVIVKPSREGSSVGMSKVVAENALQDALRLAFQHDEEVLIEKWLSGPEFT) is a binding site for ATP. Mg(2+) contacts are provided by Asp257, Glu270, and Asn272. The active site involves Ser281.

This sequence belongs to the D-alanine--D-alanine ligase family. As to quaternary structure, monomer. Mg(2+) is required as a cofactor. Requires Mn(2+) as cofactor.

The protein resides in the cytoplasm. It carries out the reaction 2 D-alanine + ATP = D-alanyl-D-alanine + ADP + phosphate + H(+). It functions in the pathway cell wall biogenesis; peptidoglycan biosynthesis. In terms of biological role, cell wall formation. The protein is D-alanine--D-alanine ligase B of Escherichia coli O6:H1 (strain CFT073 / ATCC 700928 / UPEC).